A 545-amino-acid polypeptide reads, in one-letter code: Esterase-5C (545 aa).

Residues Met1 to Ala19 form the signal peptide. A disulfide bond links Cys84 and Cys103. An N-linked (GlcNAc...) asparagine glycan is attached at Asn113. The Acyl-ester intermediate role is filled by Ser207. An intrachain disulfide couples Cys259 to Cys271. A glycan (N-linked (GlcNAc...) asparagine) is linked at Asn421. His467 serves as the catalytic Charge relay system. Residue Asn507 is glycosylated (N-linked (GlcNAc...) asparagine). Cys515 and Cys536 are oxidised to a cystine.

Belongs to the type-B carboxylesterase/lipase family.

The protein resides in the secreted. It carries out the reaction a carboxylic ester + H2O = an alcohol + a carboxylate + H(+). The chain is Esterase-5C (Est-5C) from Drosophila persimilis (Fruit fly).